We begin with the raw amino-acid sequence, 237 residues long: Ribonuclease PH (237 aa).

Phosphate is bound by residues Arg-86 and 124 to 126; that span reads GTR.

It belongs to the RNase PH family. Homohexameric ring arranged as a trimer of dimers.

The enzyme catalyses tRNA(n+1) + phosphate = tRNA(n) + a ribonucleoside 5'-diphosphate. In terms of biological role, phosphorolytic 3'-5' exoribonuclease that plays an important role in tRNA 3'-end maturation. Removes nucleotide residues following the 3'-CCA terminus of tRNAs; can also add nucleotides to the ends of RNA molecules by using nucleoside diphosphates as substrates, but this may not be physiologically important. Probably plays a role in initiation of 16S rRNA degradation (leading to ribosome degradation) during starvation. The sequence is that of Ribonuclease PH from Methylorubrum extorquens (strain PA1) (Methylobacterium extorquens).